Reading from the N-terminus, the 310-residue chain is Aspartate carbamoyltransferase catalytic subunit (310 aa).

Residues arginine 60 and threonine 61 each contribute to the carbamoyl phosphate site. Lysine 88 contacts L-aspartate. Positions 110, 138, and 141 each coordinate carbamoyl phosphate. Arginine 171 and arginine 225 together coordinate L-aspartate. Carbamoyl phosphate contacts are provided by glycine 266 and proline 267.

This sequence belongs to the aspartate/ornithine carbamoyltransferase superfamily. ATCase family. Heterododecamer (2C3:3R2) of six catalytic PyrB chains organized as two trimers (C3), and six regulatory PyrI chains organized as three dimers (R2).

It carries out the reaction carbamoyl phosphate + L-aspartate = N-carbamoyl-L-aspartate + phosphate + H(+). Its pathway is pyrimidine metabolism; UMP biosynthesis via de novo pathway; (S)-dihydroorotate from bicarbonate: step 2/3. In terms of biological role, catalyzes the condensation of carbamoyl phosphate and aspartate to form carbamoyl aspartate and inorganic phosphate, the committed step in the de novo pyrimidine nucleotide biosynthesis pathway. This is Aspartate carbamoyltransferase catalytic subunit from Christiangramia forsetii (strain DSM 17595 / CGMCC 1.15422 / KT0803) (Gramella forsetii).